The following is a 292-amino-acid chain: MINWVRVALCGMLLVMVSLVLMPVQILCLWLDLKPRRWLPRHWHRVACLLLGLRVRVHGELDRRRPLLLSANHVSWKDILVLSSVADVVFVAKSDVKSWPIFGLLARLQASVFVEREQKRTTGHQVNDIGRRLADGEIVVLFPEGTTSDGNRLLDIKTSLFGAAASAVPQSPTGVVHVQPLAISYTGIHGMPMGRYHRPIAAWPGDIGLVPHLLGVLREGALEVDVDFGEAVDYDRHANRKEVSRLIGQRIRKMLSDRLRGRSRSAAKGEPAPACSAAPDIPSDAQRSRLAP.

The helical transmembrane segment at 11 to 31 (GMLLVMVSLVLMPVQILCLWL) threads the bilayer. The disordered stretch occupies residues 258–292 (RLRGRSRSAAKGEPAPACSAAPDIPSDAQRSRLAP).

Belongs to the 1-acyl-sn-glycerol-3-phosphate acyltransferase family. OlsA subfamily.

Its subcellular location is the membrane. It catalyses the reaction a lyso-ornithine lipid + a fatty acyl-[ACP] = an N(2)-[(3R)-3-(acyloxy)acyl]-L-ornithine lipid + holo-[ACP]. It functions in the pathway lipid metabolism. In terms of biological role, catalyzes the second step in the formation of ornithine lipids, which are phosphorus-free membrane lipids. Uses acyl-acyl carrier protein (acyl-AcpP) as an acyl donor and converts lyso-ornithine lipid (LOL) into ornithine lipid (OL). This Rhizobium meliloti (strain 1021) (Ensifer meliloti) protein is Lyso-ornithine lipid O-acyltransferase.